The sequence spans 884 residues: MDPALLTPMMQHYVELKRQYPHAILLYRLGDFYEMFFQDAQRVSRELELVLTGREAGAIGRVPMCGIPYHAFDRYAAQLVAKGYALAVCDQMEPADQAKGLVRREVTRVITPGTVLEEELLQARQNNYLAAVVRLKGSKQAPCRWGLAYADISTGEFWVCQSEGQEQLEQELARLQPAEVLLPTEEGLGLGLIRPGDPQKPLGLPNQYAYTLRPAEPFELAVARENLMQTYGLRSLEGLGCEGLPLAVRAAGGLLHYLEETHSPQRCVAPKTLLQPSPQGGHPLLPPPRTYQLTDYLILDAQTRRNLELTQTIREGAFVGSLLWVLDHSRTAMGGRTLRRWLLQPLRDSEQIRLRQDTIQELLENPSLRARLGSLLDSLYDLERLANRVGSGTANPRELVALGSSLGKLPQLAELVGEAKTPLLQSLQQVDPALVDLGRRIEHTLLPSPPPILTEGGLIRPGVDPELDRLRQQVEQDRQWVAQLEKSERDRTGIPTLKVGFNKAFGYYLSISRAKAHQVPKEYIRKQTLTNEERFITPELKEKEARILTAQTDINQREYELFVQLRQEAGSRAEAIRQVAQTLAAVDALFGLAEVAVQQGYTRPLLTTDRRLIIEEGRHPVVEKSLPQGLFVPNSVQLGSPHGPDLIVLTGPNMSGKSTYLRQIGLIQILAQMGSFVPARRAELGLCDRVFTRIGAVDDLATGQSTFMVEMNETANILNHAGERSLVLLDEIGRGTATFDGLSIAWAVAEYLATQVRARTVFATHYHELNQLETLLPNVANFQVVVKELQDRIIFLHQVQPGGADRSYGIEVGRMAGLPQPVIQRAEQVLALVEKHSRIGLGLRNQGKSQPAQKNCKKEPAPNRSPDPAVGDQLSLIPAPLFPD.

ATP is bound at residue 651-658; the sequence is GPNMSGKS. Residues 843-884 are disordered; the sequence is LRNQGKSQPAQKNCKKEPAPNRSPDPAVGDQLSLIPAPLFPD.

The protein belongs to the DNA mismatch repair MutS family.

Functionally, this protein is involved in the repair of mismatches in DNA. It is possible that it carries out the mismatch recognition step. This protein has a weak ATPase activity. The chain is DNA mismatch repair protein MutS from Synechococcus sp. (strain JA-2-3B'a(2-13)) (Cyanobacteria bacterium Yellowstone B-Prime).